Here is a 430-residue protein sequence, read N- to C-terminus: Lipoyl synthase, mitochondrial (430 aa).

A mitochondrion-targeting transit peptide spans 1-37 (MAASTGKLRTLFSAHSSLSARPSSALPALRLTILRSY). A compositionally biased stretch (low complexity) spans 40 to 56 (TTPPDSSISDPSNSSTT). Residues 40-63 (TTPPDSSISDPSNSSTTVKRPPTA) are disordered. [4Fe-4S] cluster is bound by residues Cys141, Cys146, Cys152, Cys172, Cys176, Cys179, and Ser387. The region spanning 155–376 (GSSKSAATAT…KERALEMGFL (222 aa)) is the Radical SAM core domain.

It belongs to the radical SAM superfamily. Lipoyl synthase family. It depends on [4Fe-4S] cluster as a cofactor.

Its subcellular location is the mitochondrion. The catalysed reaction is [[Fe-S] cluster scaffold protein carrying a second [4Fe-4S](2+) cluster] + N(6)-octanoyl-L-lysyl-[protein] + 2 oxidized [2Fe-2S]-[ferredoxin] + 2 S-adenosyl-L-methionine + 4 H(+) = [[Fe-S] cluster scaffold protein] + N(6)-[(R)-dihydrolipoyl]-L-lysyl-[protein] + 4 Fe(3+) + 2 hydrogen sulfide + 2 5'-deoxyadenosine + 2 L-methionine + 2 reduced [2Fe-2S]-[ferredoxin]. It participates in protein modification; protein lipoylation via endogenous pathway; protein N(6)-(lipoyl)lysine from octanoyl-[acyl-carrier-protein]: step 2/2. Catalyzes the radical-mediated insertion of two sulfur atoms into the C-6 and C-8 positions of the octanoyl moiety bound to the lipoyl domains of lipoate-dependent enzymes, thereby converting the octanoylated domains into lipoylated derivatives. The chain is Lipoyl synthase, mitochondrial from Ajellomyces dermatitidis (strain ER-3 / ATCC MYA-2586) (Blastomyces dermatitidis).